The primary structure comprises 139 residues: Small ribosomal subunit protein uS12 (139 aa).

Residues 12 to 55 are disordered; sequence RVDKVKKSDSPALNKGYNSFKKSQTDVSSPQKRGVCTRVGTMTP. The span at 27 to 42 shows a compositional bias: polar residues; the sequence is GYNSFKKSQTDVSSPQ. Aspartate 102 is subject to 3-methylthioaspartic acid. Residues 119-139 are disordered; sequence GVQNRMQGRSKYGTKKPKDKK. Basic residues predominate over residues 130 to 139; that stretch reads YGTKKPKDKK.

The protein belongs to the universal ribosomal protein uS12 family. Part of the 30S ribosomal subunit. Contacts proteins S8 and S17. May interact with IF1 in the 30S initiation complex.

In terms of biological role, with S4 and S5 plays an important role in translational accuracy. Interacts with and stabilizes bases of the 16S rRNA that are involved in tRNA selection in the A site and with the mRNA backbone. Located at the interface of the 30S and 50S subunits, it traverses the body of the 30S subunit contacting proteins on the other side and probably holding the rRNA structure together. The combined cluster of proteins S8, S12 and S17 appears to hold together the shoulder and platform of the 30S subunit. This Shouchella clausii (strain KSM-K16) (Alkalihalobacillus clausii) protein is Small ribosomal subunit protein uS12.